A 966-amino-acid chain; its full sequence is Isoleucine--tRNA ligase (966 aa).

A compositionally biased stretch (basic and acidic residues) spans 1–16 (MSDDKRAKSDKNEKNK). A disordered region spans residues 1-24 (MSDDKRAKSDKNEKNKYPVNLLDT). A 'HIGH' region motif is present at residues 69-79 (PYANGDIHIGH). E599 contacts L-isoleucyl-5'-AMP. The 'KMSKS' region signature appears at 640–644 (KMSKS). K643 serves as a coordination point for ATP. Residues C929, C932, C949, and C952 each contribute to the Zn(2+) site.

This sequence belongs to the class-I aminoacyl-tRNA synthetase family. IleS type 1 subfamily. In terms of assembly, monomer. The cofactor is Zn(2+).

The protein resides in the cytoplasm. It carries out the reaction tRNA(Ile) + L-isoleucine + ATP = L-isoleucyl-tRNA(Ile) + AMP + diphosphate. Functionally, catalyzes the attachment of isoleucine to tRNA(Ile). As IleRS can inadvertently accommodate and process structurally similar amino acids such as valine, to avoid such errors it has two additional distinct tRNA(Ile)-dependent editing activities. One activity is designated as 'pretransfer' editing and involves the hydrolysis of activated Val-AMP. The other activity is designated 'posttransfer' editing and involves deacylation of mischarged Val-tRNA(Ile). In Cupriavidus taiwanensis (strain DSM 17343 / BCRC 17206 / CCUG 44338 / CIP 107171 / LMG 19424 / R1) (Ralstonia taiwanensis (strain LMG 19424)), this protein is Isoleucine--tRNA ligase.